A 212-amino-acid polypeptide reads, in one-letter code: Translation initiation factor IF-3 (212 aa).

The segment covering 190 to 203 has biased composition (basic and acidic residues); sequence LVDKNSDSQDKSVS. Residues 190 to 212 are disordered; it reads LVDKNSDSQDKSVSEEDTNEGEQ.

It belongs to the IF-3 family. In terms of assembly, monomer.

Its subcellular location is the cytoplasm. In terms of biological role, IF-3 binds to the 30S ribosomal subunit and shifts the equilibrium between 70S ribosomes and their 50S and 30S subunits in favor of the free subunits, thus enhancing the availability of 30S subunits on which protein synthesis initiation begins. The sequence is that of Translation initiation factor IF-3 from Mycoplasmopsis fermentans (Mycoplasma fermentans).